Consider the following 875-residue polypeptide: DNA gyrase subunit A (875 aa).

In terms of domain architecture, Topo IIA-type catalytic spans 34–533 (LPDVRDGLKP…NSADINLEDL (500 aa)). Tyr-122 acts as the O-(5'-phospho-DNA)-tyrosine intermediate in catalysis. A GyrA-box motif is present at residues 560–566 (QRRGGKG). The disordered stretch occupies residues 841-875 (EPVDEEDLDTIDGSAAEGDDEIAPEVDVDDEPEEE). Acidic residues predominate over residues 857–875 (EGDDEIAPEVDVDDEPEEE).

It belongs to the type II topoisomerase GyrA/ParC subunit family. Heterotetramer, composed of two GyrA and two GyrB chains. In the heterotetramer, GyrA contains the active site tyrosine that forms a transient covalent intermediate with DNA, while GyrB binds cofactors and catalyzes ATP hydrolysis.

It localises to the cytoplasm. The enzyme catalyses ATP-dependent breakage, passage and rejoining of double-stranded DNA.. In terms of biological role, a type II topoisomerase that negatively supercoils closed circular double-stranded (ds) DNA in an ATP-dependent manner to modulate DNA topology and maintain chromosomes in an underwound state. Negative supercoiling favors strand separation, and DNA replication, transcription, recombination and repair, all of which involve strand separation. Also able to catalyze the interconversion of other topological isomers of dsDNA rings, including catenanes and knotted rings. Type II topoisomerases break and join 2 DNA strands simultaneously in an ATP-dependent manner. The protein is DNA gyrase subunit A of Shigella flexneri.